Here is a 284-residue protein sequence, read N- to C-terminus: Orotidine 5'-phosphate decarboxylase (284 aa).

Residues Asp42, 64-66 (KTH), 96-105 (DRKFADIGNT), Tyr237, and Arg255 contribute to the substrate site. Lys98 serves as the catalytic Proton donor.

It belongs to the OMP decarboxylase family.

The catalysed reaction is orotidine 5'-phosphate + H(+) = UMP + CO2. It participates in pyrimidine metabolism; UMP biosynthesis via de novo pathway; UMP from orotate: step 2/2. The chain is Orotidine 5'-phosphate decarboxylase (URA3) from Magnusiomyces magnusii (Yeast).